The primary structure comprises 185 residues: Small ribosomal subunit protein uS4c (185 aa).

In terms of domain architecture, S4 RNA-binding spans 72 to 134; that stretch reads MRLDNVIFRL…PTSCNALKGE (63 aa). The disordered stretch occupies residues 132–154; that stretch reads KGESPGGGETPDHLTASLSEGSR.

This sequence belongs to the universal ribosomal protein uS4 family. In terms of assembly, part of the 30S ribosomal subunit. Contacts protein S5. The interaction surface between S4 and S5 is involved in control of translational fidelity.

The protein resides in the plastid. The protein localises to the chloroplast. Functionally, one of the primary rRNA binding proteins, it binds directly to 16S rRNA where it nucleates assembly of the body of the 30S subunit. Its function is as follows. With S5 and S12 plays an important role in translational accuracy. This chain is Small ribosomal subunit protein uS4c (rps4), found in Woodwardia radicans (Rooting chainfern).